Here is a 399-residue protein sequence, read N- to C-terminus: MDTHAFKRSLHHSDRYNRRGFGRAEEVAGSLEQAYQSSLIGSIRDNGYRLNHGRLQVRLAKDFGFCWGVERAVAMAYETRKHYPSERLWITNEIIHNPSVNDHLREMNVQFIPVEQGVKDFSGVTSGDVVILPAFGATVQEMQLLNERGCHIVDTTCPWVSKVWNTVEKHKKQTFTSIIHGKVKHEETLATSSFAGTYLVVLDLEEAQIVADYILGNGDRDSFMARFSKACSPGFDPDQDLEKLGVANQTTMLKRETEEIGRLFERTMLSKFGPTQLNEHFLAFNTICDATQERQDAMFSLVDEPLDLMVVIGGYNSSNTTHLQEIAINRGIRSFHIDTPERISADNSIEHKPLGQELIRELEFLPSGTVTVGITSGASTPDRVVEHVIQRLISLSEEN.

A [4Fe-4S] cluster-binding site is contributed by C66. (2E)-4-hydroxy-3-methylbut-2-enyl diphosphate is bound at residue H96. H96 serves as a coordination point for dimethylallyl diphosphate. H96 serves as a coordination point for isopentenyl diphosphate. C157 contributes to the [4Fe-4S] cluster binding site. H185 serves as a coordination point for (2E)-4-hydroxy-3-methylbut-2-enyl diphosphate. H185 provides a ligand contact to dimethylallyl diphosphate. H185 serves as a coordination point for isopentenyl diphosphate. E187 serves as the catalytic Proton donor. Residue T250 participates in (2E)-4-hydroxy-3-methylbut-2-enyl diphosphate binding. [4Fe-4S] cluster is bound at residue C288. (2E)-4-hydroxy-3-methylbut-2-enyl diphosphate is bound by residues S317, S318, N319, and S379. 4 residues coordinate dimethylallyl diphosphate: S317, S318, N319, and S379. Isopentenyl diphosphate contacts are provided by S317, S318, N319, and S379.

The protein belongs to the IspH family. The cofactor is [4Fe-4S] cluster.

It catalyses the reaction isopentenyl diphosphate + 2 oxidized [2Fe-2S]-[ferredoxin] + H2O = (2E)-4-hydroxy-3-methylbut-2-enyl diphosphate + 2 reduced [2Fe-2S]-[ferredoxin] + 2 H(+). The enzyme catalyses dimethylallyl diphosphate + 2 oxidized [2Fe-2S]-[ferredoxin] + H2O = (2E)-4-hydroxy-3-methylbut-2-enyl diphosphate + 2 reduced [2Fe-2S]-[ferredoxin] + 2 H(+). The protein operates within isoprenoid biosynthesis; dimethylallyl diphosphate biosynthesis; dimethylallyl diphosphate from (2E)-4-hydroxy-3-methylbutenyl diphosphate: step 1/1. It participates in isoprenoid biosynthesis; isopentenyl diphosphate biosynthesis via DXP pathway; isopentenyl diphosphate from 1-deoxy-D-xylulose 5-phosphate: step 6/6. In terms of biological role, catalyzes the conversion of 1-hydroxy-2-methyl-2-(E)-butenyl 4-diphosphate (HMBPP) into a mixture of isopentenyl diphosphate (IPP) and dimethylallyl diphosphate (DMAPP). Acts in the terminal step of the DOXP/MEP pathway for isoprenoid precursor biosynthesis. This is 4-hydroxy-3-methylbut-2-enyl diphosphate reductase from Synechococcus sp. (strain WH7803).